The primary structure comprises 191 residues: Protein Ves (191 aa).

Belongs to the Ves family.

The polypeptide is Protein Ves (Citrobacter koseri (strain ATCC BAA-895 / CDC 4225-83 / SGSC4696)).